Consider the following 315-residue polypeptide: Tyrosine--tRNA ligase (315 aa).

Tyrosine 32 is an L-tyrosine binding site. Residues 37 to 45 carry the 'HIGH' region motif; that stretch reads PSGEIHLGH. L-tyrosine contacts are provided by tyrosine 152, glutamine 156, aspartate 159, and glutamine 174. The 'KMSKS' region motif lies at 208–212; sequence KMSSS. Serine 211 serves as a coordination point for ATP.

Belongs to the class-I aminoacyl-tRNA synthetase family. TyrS type 3 subfamily. In terms of assembly, homodimer.

Its subcellular location is the cytoplasm. The catalysed reaction is tRNA(Tyr) + L-tyrosine + ATP = L-tyrosyl-tRNA(Tyr) + AMP + diphosphate + H(+). Functionally, catalyzes the attachment of tyrosine to tRNA(Tyr) in a two-step reaction: tyrosine is first activated by ATP to form Tyr-AMP and then transferred to the acceptor end of tRNA(Tyr). In Methanoculleus marisnigri (strain ATCC 35101 / DSM 1498 / JR1), this protein is Tyrosine--tRNA ligase.